Reading from the N-terminus, the 143-residue chain is Ribosome-binding factor A (143 aa).

Over residues 119-129 (AVGDKPAVPRD) the composition is skewed to basic and acidic residues. A disordered region spans residues 119-143 (AVGDKPAVPRDDNDDPVSDNPERDA).

The protein belongs to the RbfA family. As to quaternary structure, monomer. Binds 30S ribosomal subunits, but not 50S ribosomal subunits or 70S ribosomes.

It localises to the cytoplasm. In terms of biological role, one of several proteins that assist in the late maturation steps of the functional core of the 30S ribosomal subunit. Associates with free 30S ribosomal subunits (but not with 30S subunits that are part of 70S ribosomes or polysomes). Required for efficient processing of 16S rRNA. May interact with the 5'-terminal helix region of 16S rRNA. This chain is Ribosome-binding factor A, found in Marinobacter nauticus (strain ATCC 700491 / DSM 11845 / VT8) (Marinobacter aquaeolei).